A 142-amino-acid chain; its full sequence is Small ribosomal subunit protein uS12 (142 aa).

The disordered stretch occupies residues 1–44; the sequence is MANGKYAARKLKKDRQKHRWSDTDYARRERGLGKKSDPLEGAPQ. Basic residues predominate over residues 7–18; it reads AARKLKKDRQKH. Over residues 19–38 the composition is skewed to basic and acidic residues; sequence RWSDTDYARRERGLGKKSDP.

The protein belongs to the universal ribosomal protein uS12 family. In terms of assembly, part of the 30S ribosomal subunit.

Functionally, with S4 and S5 plays an important role in translational accuracy. Located at the interface of the 30S and 50S subunits. This Haloarcula marismortui (strain ATCC 43049 / DSM 3752 / JCM 8966 / VKM B-1809) (Halobacterium marismortui) protein is Small ribosomal subunit protein uS12.